The chain runs to 467 residues: FAD-dependent oxidoreductase dbaF (467 aa).

The first 20 residues, 1–20, serve as a signal peptide directing secretion; it reads MKSVLASGALTLAFSLAALA. Residues Asn96, Asn134, Asn337, Asn391, and Asn451 are each glycosylated (N-linked (GlcNAc...) asparagine).

The protein belongs to the beta-cyclopiazonate dehydrogenase family. FAD serves as cofactor.

It functions in the pathway secondary metabolite biosynthesis. FAD-dependent oxidoreductase; part of the gene cluster that mediates the biosynthesis of the antibiotic 2,4-dihydroxy-3-methyl-6-(2-oxopropyl)benzaldehyde (DHMBA) and its derivatives. The direct non-reducing polyketide synthase dbaI product is 2,4-dihydroxy-3-methyl-6-(2-oxopropyl)benzaldehyde (DHMBA), produced by condensation of one acetyl-CoA starter unit with 4 malonyl-CoA units and one methylation step. The FAD-dependent monooxygenase dbaH is responsible for the synthesis of yellow pigments derived from the oxidation of DHMBA. The roles of dbaB, C, E and F have still to be determined. The protein is FAD-dependent oxidoreductase dbaF of Emericella nidulans (strain FGSC A4 / ATCC 38163 / CBS 112.46 / NRRL 194 / M139) (Aspergillus nidulans).